Reading from the N-terminus, the 265-residue chain is Type 1 encapsulin shell protein (265 aa).

FMN is bound by residues 79-81 (RAT), tryptophan 87, and 90-94 (DNLER). A pore-forming loop region spans residues 184–189 (EAGHYP). FMN is bound at residue glutamate 235.

It belongs to the encapsulin family. Family 1 subfamily. As to quaternary structure, homomultimeric. This encapsulin nanocompartment is formed by 60 subunits; monomers form 12 pentamers which assemble to form shells. There are 12 pores where the pentamers meet as well as 3-fold axis channels and dimer channels; none are larger than 3-4 Angstroms in diameter. The N-terminus of the protein is inside the shell, the C-terminus is outside. Probably 3, 4 or 5 Flp cargo decamers bind inside the encapulin nanocompartment. It depends on FMN as a cofactor.

Its subcellular location is the encapsulin nanocompartment. Proteolysis activated by calcium and cobalt. In terms of biological role, shell component of a type 1 encapsulin nanocompartment. Assembles into proteinaceous shells 23-24 nm in diameter with 2-2.5 nm thick walls. Cargo protein Flp (ferritin-like protein, probably stores iron) is targeted to the interior via its C-terminal extension; empty intact shells can be isolated in the absence of cargo protein. Fe(2+) may be able to pass though the 5-fold and dimer channels in the protein shell. Functionally, protease that exhibits activity toward chymotrypsin and trypsin substrates. Probably does not have antibacterial activity. The sequence is that of Type 1 encapsulin shell protein from Thermotoga maritima (strain ATCC 43589 / DSM 3109 / JCM 10099 / NBRC 100826 / MSB8).